The primary structure comprises 470 residues: Nucleoporin NUP49 (470 aa).

Residues Met1–Pro13 show a composition bias toward polar residues. The segment at Met1–Gln92 is disordered. GLFG repeat units lie at residues Gly17–Gly20, Gly45–Gly48, Gly63–Gly66, Gly79–Gly82, Gly96–Gly99, Gly111–Gly114, Gly127–Gly130, Gly142–Gly145, Gly156–Gly159, Gly168–Gly171, Gly181–Gly184, and Gly193–Gln197. Residues Gly20 to Ser31 are compositionally biased toward low complexity. Residues Leu32–Pro74 are compositionally biased toward polar residues. The span at Gln75 to Gln92 shows a compositional bias: low complexity. Positions Gly196 to Gln221 are disordered. Over residues Gln197–Gln206 the composition is skewed to low complexity. A compositionally biased stretch (polar residues) spans Asn207 to Gln221. 2 coiled-coil regions span residues Thr239–Asp270 and Phe375–Thr401.

Belongs to the nucleoporin GLFG family. Component of the nuclear pore complex (NPC). NPC constitutes the exclusive means of nucleocytoplasmic transport. NPCs allow the passive diffusion of ions and small molecules and the active, nuclear transport receptor-mediated bidirectional transport of macromolecules such as proteins, RNAs, ribonucleoparticles (RNPs), and ribosomal subunits across the nuclear envelope. Due to its 8-fold rotational symmetry, all subunits are present with 8 copies or multiples thereof.

Its subcellular location is the nucleus. It localises to the nuclear pore complex. The protein resides in the nucleus membrane. Functions as a component of the nuclear pore complex (NPC). NPC components, collectively referred to as nucleoporins (NUPs), can play the role of both NPC structural components and of docking or interaction partners for transiently associated nuclear transport factors. Active directional transport is assured by both, a Phe-Gly (FG) repeat affinity gradient for these transport factors across the NPC and a transport cofactor concentration gradient across the nuclear envelope (GSP1 and GSP2 GTPases associated predominantly with GTP in the nucleus, with GDP in the cytoplasm). NUP49 plays an important role in several nuclear transport pathways including poly(A)+ RNA, tRNA, and pre-ribosome transport. The sequence is that of Nucleoporin NUP49 (NUP49) from Chaetomium thermophilum (strain DSM 1495 / CBS 144.50 / IMI 039719) (Thermochaetoides thermophila).